The following is a 419-amino-acid chain: uncharacterized protein (419 aa).

7 helical membrane-spanning segments follow: residues 16 to 36 (IMAKSFIISTVITVLLVLVVT), 186 to 206 (LVYIMLFVIYFSVIMYASMIA), 235 to 255 (LLGIGLVGITQLAIIIGAGSL), 283 to 303 (VIYAVIFFLLGYFLYATLAAF), 318 to 338 (ITPMTLLVVAGFMIAMFGLNA), 340 to 360 (DAGFITVTSFIPFFTPMIMFL), and 369 to 389 (FWQAAVGIGITLLTIVILAVI).

The protein to M.jannaschii MJ1024.

Its subcellular location is the cell membrane. This is an uncharacterized protein from Bacillus subtilis (strain 168).